An 81-amino-acid polypeptide reads, in one-letter code: Sulfur carrier protein TusA (81 aa).

C19 serves as the catalytic Cysteine persulfide intermediate.

Belongs to the sulfur carrier protein TusA family.

It localises to the cytoplasm. Sulfur carrier protein which probably makes part of a sulfur-relay system. The protein is Sulfur carrier protein TusA of Shewanella piezotolerans (strain WP3 / JCM 13877).